A 363-amino-acid polypeptide reads, in one-letter code: Ribosomal RNA large subunit methyltransferase M (363 aa).

S-adenosyl-L-methionine-binding positions include serine 190, 223-226, aspartate 242, aspartate 262, and aspartate 279; that span reads CPGG. Lysine 308 (proton acceptor) is an active-site residue.

The protein belongs to the class I-like SAM-binding methyltransferase superfamily. RNA methyltransferase RlmE family. RlmM subfamily. As to quaternary structure, monomer.

It localises to the cytoplasm. It catalyses the reaction cytidine(2498) in 23S rRNA + S-adenosyl-L-methionine = 2'-O-methylcytidine(2498) in 23S rRNA + S-adenosyl-L-homocysteine + H(+). In terms of biological role, catalyzes the 2'-O-methylation at nucleotide C2498 in 23S rRNA. The sequence is that of Ribosomal RNA large subunit methyltransferase M from Aliivibrio salmonicida (strain LFI1238) (Vibrio salmonicida (strain LFI1238)).